The sequence spans 168 residues: GTP-dependent dephospho-CoA kinase (168 aa).

Residues D49, V50, V51, D68, K70, and E120 each coordinate GTP.

This sequence belongs to the GTP-dependent DPCK family.

The enzyme catalyses 3'-dephospho-CoA + GTP = GDP + CoA + H(+). It participates in cofactor biosynthesis; coenzyme A biosynthesis. In terms of biological role, catalyzes the GTP-dependent phosphorylation of the 3'-hydroxyl group of dephosphocoenzyme A to form coenzyme A (CoA). The polypeptide is GTP-dependent dephospho-CoA kinase (Pyrobaculum neutrophilum (strain DSM 2338 / JCM 9278 / NBRC 100436 / V24Sta) (Thermoproteus neutrophilus)).